The chain runs to 421 residues: Histidine--tRNA ligase (421 aa).

The protein belongs to the class-II aminoacyl-tRNA synthetase family. In terms of assembly, homodimer.

The protein localises to the cytoplasm. It catalyses the reaction tRNA(His) + L-histidine + ATP = L-histidyl-tRNA(His) + AMP + diphosphate + H(+). The polypeptide is Histidine--tRNA ligase (Francisella tularensis subsp. tularensis (strain SCHU S4 / Schu 4)).